Here is a 292-residue protein sequence, read N- to C-terminus: ATP synthase gamma chain (292 aa).

This sequence belongs to the ATPase gamma chain family. F-type ATPases have 2 components, CF(1) - the catalytic core - and CF(0) - the membrane proton channel. CF(1) has five subunits: alpha(3), beta(3), gamma(1), delta(1), epsilon(1). CF(0) has three main subunits: a, b and c.

It localises to the cell inner membrane. Its function is as follows. Produces ATP from ADP in the presence of a proton gradient across the membrane. The gamma chain is believed to be important in regulating ATPase activity and the flow of protons through the CF(0) complex. The sequence is that of ATP synthase gamma chain from Chlorobaculum parvum (strain DSM 263 / NCIMB 8327) (Chlorobium vibrioforme subsp. thiosulfatophilum).